We begin with the raw amino-acid sequence, 147 residues long: Large ribosomal subunit protein bL21 (147 aa).

Residues 115-147 (KSIKVGKPTPKSSSKKEETVKKETKPKSEKSTN) form a disordered region. The segment covering 128–147 (SKKEETVKKETKPKSEKSTN) has biased composition (basic and acidic residues).

Belongs to the bacterial ribosomal protein bL21 family. In terms of assembly, part of the 50S ribosomal subunit. Contacts protein L20.

Functionally, this protein binds to 23S rRNA in the presence of protein L20. The protein is Large ribosomal subunit protein bL21 of Prochlorococcus marinus (strain MIT 9215).